A 137-amino-acid chain; its full sequence is Putative nucleoside diphosphate kinase (137 aa).

5 residues coordinate ATP: Phe-45, Arg-73, Thr-79, Arg-90, and Asn-100. The active-site Pros-phosphohistidine intermediate is the His-103.

This sequence belongs to the NDK family. Requires Mg(2+) as cofactor.

It carries out the reaction a 2'-deoxyribonucleoside 5'-diphosphate + ATP = a 2'-deoxyribonucleoside 5'-triphosphate + ADP. The catalysed reaction is a ribonucleoside 5'-diphosphate + ATP = a ribonucleoside 5'-triphosphate + ADP. Major role in the synthesis of nucleoside triphosphates other than ATP. The ATP gamma phosphate is transferred to the NDP beta phosphate via a ping-pong mechanism, using a phosphorylated active-site intermediate. This is Putative nucleoside diphosphate kinase (NME2P1) from Homo sapiens (Human).